We begin with the raw amino-acid sequence, 201 residues long: Recombination protein RecR (201 aa).

A C4-type zinc finger spans residues 60-75; it reads CKTCGNIDTQNPCTVC. The Toprim domain maps to 83–178; the sequence is SIIVVVADVA…KVTRLAHGVP (96 aa).

It belongs to the RecR family.

In terms of biological role, may play a role in DNA repair. It seems to be involved in an RecBC-independent recombinational process of DNA repair. It may act with RecF and RecO. The sequence is that of Recombination protein RecR from Rhodopseudomonas palustris (strain HaA2).